Consider the following 591-residue polypeptide: L-fucose isomerase (591 aa).

Active-site proton acceptor residues include Glu-337 and Asp-361. Mn(2+) is bound by residues Glu-337, Asp-361, and His-528.

Belongs to the L-fucose isomerase family. In terms of assembly, homohexamer. It depends on Mn(2+) as a cofactor.

Its subcellular location is the cytoplasm. The enzyme catalyses L-fucose = L-fuculose. It participates in carbohydrate degradation; L-fucose degradation; L-lactaldehyde and glycerone phosphate from L-fucose: step 1/3. Converts the aldose L-fucose into the corresponding ketose L-fuculose. The sequence is that of L-fucose isomerase from Escherichia coli (strain SE11).